A 421-amino-acid polypeptide reads, in one-letter code: Gamma-glutamyl phosphate reductase (421 aa).

It belongs to the gamma-glutamyl phosphate reductase family.

The protein resides in the cytoplasm. The enzyme catalyses L-glutamate 5-semialdehyde + phosphate + NADP(+) = L-glutamyl 5-phosphate + NADPH + H(+). It functions in the pathway amino-acid biosynthesis; L-proline biosynthesis; L-glutamate 5-semialdehyde from L-glutamate: step 2/2. In terms of biological role, catalyzes the NADPH-dependent reduction of L-glutamate 5-phosphate into L-glutamate 5-semialdehyde and phosphate. The product spontaneously undergoes cyclization to form 1-pyrroline-5-carboxylate. This Leptospira biflexa serovar Patoc (strain Patoc 1 / ATCC 23582 / Paris) protein is Gamma-glutamyl phosphate reductase.